The chain runs to 515 residues: Maturase K (515 aa).

Belongs to the intron maturase 2 family. MatK subfamily.

It localises to the plastid. The protein localises to the chloroplast. Functionally, usually encoded in the trnK tRNA gene intron. Probably assists in splicing its own and other chloroplast group II introns. The polypeptide is Maturase K (Alpinia calcarata (Snap ginger)).